Reading from the N-terminus, the 309-residue chain is Probable manganese-dependent inorganic pyrophosphatase (309 aa).

Positions 9, 13, 15, 75, 97, and 149 each coordinate Mn(2+).

This sequence belongs to the PPase class C family. Mn(2+) is required as a cofactor.

The protein localises to the cytoplasm. It carries out the reaction diphosphate + H2O = 2 phosphate + H(+). The chain is Probable manganese-dependent inorganic pyrophosphatase from Staphylococcus aureus (strain COL).